A 154-amino-acid polypeptide reads, in one-letter code: MIDPAQSILDIRQILGLLPHRYPFLLVDRVVEYVPGDYIKAYKNVTMNEPFFQGHFPGVPVMPGVLIMEALAQAGGILVVKSTDTAVEDKLFLFTGIESVRFRKPVYPGDKLELHCRLLKHKLKLWKMEGRAYVDGKLAAEAVMTAAVTNREDM.

His55 is an active-site residue.

Belongs to the thioester dehydratase family. FabZ subfamily.

It is found in the cytoplasm. The enzyme catalyses a (3R)-hydroxyacyl-[ACP] = a (2E)-enoyl-[ACP] + H2O. In terms of biological role, involved in unsaturated fatty acids biosynthesis. Catalyzes the dehydration of short chain beta-hydroxyacyl-ACPs and long chain saturated and unsaturated beta-hydroxyacyl-ACPs. The protein is 3-hydroxyacyl-[acyl-carrier-protein] dehydratase FabZ of Nitratidesulfovibrio vulgaris (strain ATCC 29579 / DSM 644 / CCUG 34227 / NCIMB 8303 / VKM B-1760 / Hildenborough) (Desulfovibrio vulgaris).